A 144-amino-acid polypeptide reads, in one-letter code: ATP synthase epsilon chain (144 aa).

It belongs to the ATPase epsilon chain family. As to quaternary structure, F-type ATPases have 2 components, CF(1) - the catalytic core - and CF(0) - the membrane proton channel. CF(1) has five subunits: alpha(3), beta(3), gamma(1), delta(1), epsilon(1). CF(0) has three main subunits: a, b and c.

Its subcellular location is the cell inner membrane. Its function is as follows. Produces ATP from ADP in the presence of a proton gradient across the membrane. This chain is ATP synthase epsilon chain, found in Ectopseudomonas mendocina (strain ymp) (Pseudomonas mendocina).